A 516-amino-acid chain; its full sequence is 1-pyrroline-5-carboxylate dehydrogenase (516 aa).

Residues glutamate 287 and cysteine 321 contribute to the active site.

It belongs to the aldehyde dehydrogenase family. RocA subfamily.

The catalysed reaction is L-glutamate 5-semialdehyde + NAD(+) + H2O = L-glutamate + NADH + 2 H(+). Its pathway is amino-acid degradation; L-proline degradation into L-glutamate; L-glutamate from L-proline: step 2/2. In Bacillus licheniformis (strain ATCC 14580 / DSM 13 / JCM 2505 / CCUG 7422 / NBRC 12200 / NCIMB 9375 / NCTC 10341 / NRRL NRS-1264 / Gibson 46), this protein is 1-pyrroline-5-carboxylate dehydrogenase.